A 181-amino-acid polypeptide reads, in one-letter code: ADP-ribosylation factor 1 (181 aa).

The N-myristoyl glycine moiety is linked to residue glycine 2. GTP contacts are provided by residues leucine 25–threonine 32, threonine 48, glycine 70, asparagine 126–aspartate 129, and alanine 160–threonine 161. Residue lysine 127 forms a Glycyl lysine isopeptide (Lys-Gly) (interchain with G-Cter in ubiquitin) linkage.

This sequence belongs to the small GTPase superfamily. Arf family. In terms of assembly, interacts with RUD3. Interacts with VPS13 (via C-terminal part); the interaction is direct.

Its subcellular location is the golgi apparatus. It carries out the reaction GTP + H2O = GDP + phosphate + H(+). In terms of biological role, GTP-binding protein involved in Golgi vesicle trafficking. May modulate vesicle budding and uncoating within the Golgi apparatus. May recruit the lipid transfer protein VPS13 to Golgi membranes. Recruits polyadenylate-binding protein PAB1 to COPI vesicles, and this is required for correct localization of the asymmetrically distributed ASH1 mRNA. This is ADP-ribosylation factor 1 (ARF1) from Saccharomyces cerevisiae (strain ATCC 204508 / S288c) (Baker's yeast).